The primary structure comprises 410 residues: Regulator of microtubule dynamics protein 2 (410 aa).

A helical membrane pass occupies residues 9-28; it reads LILGIMAGTAGISLLAFWYH. Phosphoserine is present on Ser51. A coiled-coil region spans residues 69 to 110; sequence QRRQLQILEKLNELLTNMEELKEEIRFLKETIPKLEECIQDE. The disordered stretch occupies residues 120–151; sequence ISPQHRARKKKGTTVQRSATSNSSEEAESEGG. A Phosphoserine modification is found at Ser121. Positions 121 to 131 are enriched in basic residues; sequence SPQHRARKKKG. Thr139 carries the phosphothreonine modification. Tyr152 carries the phosphotyrosine modification. Phosphothreonine is present on residues Thr154 and Thr157.

This sequence belongs to the RMDN family. Interacts with microtubules.

Its subcellular location is the membrane. It localises to the cytoplasm. The protein localises to the cytoskeleton. The protein resides in the spindle. It is found in the spindle pole. The chain is Regulator of microtubule dynamics protein 2 (Rmdn2) from Mus musculus (Mouse).